We begin with the raw amino-acid sequence, 327 residues long: Undecaprenyl-phosphate 4-deoxy-4-formamido-L-arabinose transferase (327 aa).

The next 2 membrane-spanning stretches (helical) occupy residues 236-256 (LSVFGSIIAVLGFTLSVLLVV) and 270-290 (VFMLFAVLFMFIGAQFVAMGL).

Belongs to the glycosyltransferase 2 family.

It localises to the cell inner membrane. The enzyme catalyses UDP-4-deoxy-4-formamido-beta-L-arabinose + di-trans,octa-cis-undecaprenyl phosphate = 4-deoxy-4-formamido-alpha-L-arabinopyranosyl di-trans,octa-cis-undecaprenyl phosphate + UDP. It functions in the pathway glycolipid biosynthesis; 4-amino-4-deoxy-alpha-L-arabinose undecaprenyl phosphate biosynthesis; 4-amino-4-deoxy-alpha-L-arabinose undecaprenyl phosphate from UDP-4-deoxy-4-formamido-beta-L-arabinose and undecaprenyl phosphate: step 1/2. The protein operates within bacterial outer membrane biogenesis; lipopolysaccharide biosynthesis. Functionally, catalyzes the transfer of 4-deoxy-4-formamido-L-arabinose from UDP to undecaprenyl phosphate. The modified arabinose is attached to lipid A and is required for resistance to polymyxin and cationic antimicrobial peptides. This chain is Undecaprenyl-phosphate 4-deoxy-4-formamido-L-arabinose transferase, found in Enterobacter sp. (strain 638).